A 249-amino-acid chain; its full sequence is Small ribosomal subunit protein eS6 (249 aa).

The segment covering 223–238 (LRQRDHSKKHTQKVHA) has biased composition (basic residues). The segment at 223–249 (LRQRDHSKKHTQKVHAQRAEVAAFQKK) is disordered.

It belongs to the eukaryotic ribosomal protein eS6 family. As to quaternary structure, component of the small ribosomal subunit. Part of the small subunit (SSU) processome, composed of more than 70 proteins and the RNA chaperone small nucleolar RNA (snoRNA) U3. In terms of processing, ribosomal protein S6 is the major substrate of protein kinases in eukaryote ribosomes.

The protein localises to the cytoplasm. Its subcellular location is the nucleus. It localises to the nucleolus. Functionally, component of the 40S small ribosomal subunit. Plays an important role in controlling cell growth and proliferation through the selective translation of particular classes of mRNA. Part of the small subunit (SSU) processome, first precursor of the small eukaryotic ribosomal subunit. During the assembly of the SSU processome in the nucleolus, many ribosome biogenesis factors, an RNA chaperone and ribosomal proteins associate with the nascent pre-rRNA and work in concert to generate RNA folding, modifications, rearrangements and cleavage as well as targeted degradation of pre-ribosomal RNA by the RNA exosome. This Leishmania infantum protein is Small ribosomal subunit protein eS6 (RPS6).